We begin with the raw amino-acid sequence, 1031 residues long: MASTSLVDSLTSHFPLTLPIPTPITHPHLIPSADLPVEEDLLHNPENLRSWLSYIHNVKEKIAADEPAKGGVLSPEEEILGPLASKNARDGLQRLVSIYERAIAVFPTSYKLWKAYYLTRQSYVLGELTNDAKEARSQQAKRGAAYKTNVRELLDGAEEAHEWTGGLDPVVGYAEWRSLVATGERMIMCLPNLPIPWLLHLGVLLHPKCPSVFKNGSYARRAFDRALRTLPPSLHGRVWGLYLRWAEIVGGDAGERVWRRYLKVDPSLTERHITYLLEAEEPRPLAAAKYLLSIARRAQQNLYSSLEGKSPYQLFVDFLELVEKYADQIGMDEEGTLELQRTKRAVEEKVDGEQPQVEGQEQQPQEEPASINGRLMRIAGPPVPLEQGKLFKPVNAASAQAPTQLTYDEDTDPSNPRLLDVEGIVERDGLQVYKDQAGRLWTGLATYWIKRGEFERATATFERGLAAVVTIRDFTQIFDAYAEFSETMISTLMDALADEDNLEDEDFDAEETEQELDERMKSFEELMDRRPFLVNDVLLRRNPNEVVEWEKRIALHGDDDAKVVEAYVKALDTINPRKATGPLYPLYVNFAKFYEEGGSKDDNGEPRNEPDLEQARKIFERATKVPFKAVDELAEVWCEWAEMELRNENYEEAIRLMQRATTVPKNTKINYYDDNIPPQSRLFKSLKLWSYYSDLEESIGTVESTKAVYDKIMELKIANAQVIVNYATFLEENKYFEESFKVYERGIELFHFPIAFEIWNIYLSKFVKRYGGKKLERARDLFEQALENCPEKFCKPLYLMYAKLEEEHGLAKRAMGIYDRAASTVQDSDKFEMYTIYIAKATANFGLPATRPIYERALESLPDKQTAEMCRRFARMERKLGEIDRARAIYAHASQFCDPRIEPEFWQEWNDFEIETGSEDTFREMLRIKRAVQASFNTETSFIAAQAAAASKGTEKPTDTSAQEAQDAADPMAAMERELSAAGADGARKGGAPAFVASTLNKTNANGIDEGGEETGEMANPDAIVMDEDEF.

4 HAT repeats span residues 28–60, 90–122, 214–248, and 250–269; these read HLIPSADLPVEEDLLHNPENLRSWLSYIHNVKE, DGLQRLVSIYERAIAVFPTSYKLWKAYYLTRQS, KNGSYARRAFDRALRTLPPSLHGRVWGLYLRWAEI, and GGDAGERVWRRYLKVDPSLT. The tract at residues 346–368 is disordered; it reads VEEKVDGEQPQVEGQEQQPQEEP. Positions 353 to 368 are enriched in low complexity; the sequence is EQPQVEGQEQQPQEEP. HAT repeat units follow at residues 452 to 487, 610 to 646, 664 to 698, 700 to 732, 734 to 768, 773 to 807, 845 to 879, and 881 to 915; these read GEFERATATFERGLAAVVTIRDFTQIFDAYAEFSET, PDLEQARKIFERATKVPFKAVDELAEVWCEWAEMELR, PKNTKINYYDDNIPPQSRLFKSLKLWSYYSDLEES, GTVESTKAVYDKIMELKIANAQVIVNYATFLEE, KYFEESFKVYERGIELFHFPIAFEIWNIYLSKFVK, KKLERARDLFEQALENCPEKFCKPLYLMYAKLEEE, FGLPATRPIYERALESLPDKQTAEMCRRFARMERK, and GEIDRARAIYAHASQFCDPRIEPEFWQEWNDFEIE. Disordered regions lie at residues 948–969 and 1003–1031; these read AAASKGTEKPTDTSAQEAQDAA and TNANGIDEGGEETGEMANPDAIVMDEDEF.

The protein belongs to the crooked-neck family. As to quaternary structure, associated with the spliceosome.

It localises to the nucleus. Involved in pre-mRNA splicing and cell cycle progression. The sequence is that of Pre-mRNA-splicing factor SYF1 (SYF1) from Cryptococcus neoformans var. neoformans serotype D (strain B-3501A) (Filobasidiella neoformans).